Here is a 133-residue protein sequence, read N- to C-terminus: Large ribosomal subunit protein bL12 (133 aa).

The segment at 98–118 is disordered; that stretch reads DMVESTPKPIKEGTGKEDAED.

It belongs to the bacterial ribosomal protein bL12 family. In terms of assembly, homodimer. Part of the ribosomal stalk of the 50S ribosomal subunit. Forms a multimeric L10(L12)X complex, where L10 forms an elongated spine to which 2 to 4 L12 dimers bind in a sequential fashion. Binds GTP-bound translation factors.

Functionally, forms part of the ribosomal stalk which helps the ribosome interact with GTP-bound translation factors. Is thus essential for accurate translation. The sequence is that of Large ribosomal subunit protein bL12 from Crocosphaera subtropica (strain ATCC 51142 / BH68) (Cyanothece sp. (strain ATCC 51142)).